The following is a 419-amino-acid chain: UDP-N-acetylglucosamine 1-carboxyvinyltransferase (419 aa).

Residue 22 to 23 (KN) coordinates phosphoenolpyruvate. Arg91 contributes to the UDP-N-acetyl-alpha-D-glucosamine binding site. The active-site Proton donor is Cys115. Cys115 carries the 2-(S-cysteinyl)pyruvic acid O-phosphothioketal modification. Residues 120–124 (RPVDL), 160–163 (KVSV), Asp305, and Val327 each bind UDP-N-acetyl-alpha-D-glucosamine.

It belongs to the EPSP synthase family. MurA subfamily.

It is found in the cytoplasm. The enzyme catalyses phosphoenolpyruvate + UDP-N-acetyl-alpha-D-glucosamine = UDP-N-acetyl-3-O-(1-carboxyvinyl)-alpha-D-glucosamine + phosphate. Its pathway is cell wall biogenesis; peptidoglycan biosynthesis. In terms of biological role, cell wall formation. Adds enolpyruvyl to UDP-N-acetylglucosamine. This chain is UDP-N-acetylglucosamine 1-carboxyvinyltransferase, found in Shigella dysenteriae serotype 1 (strain Sd197).